The chain runs to 81 residues: MALMIEKLAPPSKRSMTKFTQHCTGNCGQFWPKTWFWSRSSFIHWRLVSRHWPLAPFQLPKTTMAYALVNTKLSALRDIGN.

In terms of biological role, part of the gene cluster that mediates the biosynthesis of elsinochrome C, a perelyenequinone phytotoxin structurally similar to cercosporin. The first step of elsinochrome C biosynthesis is performed by the polyketide synthase elcA which catalyzes the formation of nor-toralactone. The starter unit acyltransferase (SAT) domain of elcA initiates polyketide extension by the selective utilization of acetyl-CoA, which is elongated to the heptaketide in the beta-ketoacyl synthase (KS) domain by successive condensations with six malonyl units introduced by the malonyl acyltransferase (MAT) domain. The product template (PT) domain catalyzes C4-C9 and C2-C11 aldol cyclizations and dehydrations to a trihydroxynaphthalene, which is thought to be delivered to the thioesterase (TE) domain for product release. The bifunctional enzyme elcB then methylates nor-toralactone to toralactone before conducting an unusual oxidative aromatic ring opening. The next step in perylenequinone biosynthesis is an O-methylation at the nascent OH-6 of the elcB product performed by the O-methyltransferase elcD. The oxidative coupling of the two monomeric naphthol units in perylenequinone biosynthesis is catalyzed by the FAD-dependent monooxygenase elcE and the multicopper oxidase elcG. ElcG might catalyze the first intermolecular coupling in a regio- and stereo-selective manner via a phenol radical coupling mechanism and the elcE could forge the second C-C bond intramolecularly via a hydride transfer mechanism. The fasciclin domain-containing protein elcF might also play a role duting this step. The last piece of the puzzle in the biosynthesis of elsinochrome C is the additional annulation by enolate coupling to afford the dihydrobenzo(ghi)perylenequinone system, catalyzed by the FAD-dependent monooxygenase elcH. The protein is Elsinochrome C biosynthesis cluster protein SNOG_08613 of Phaeosphaeria nodorum (strain SN15 / ATCC MYA-4574 / FGSC 10173) (Glume blotch fungus).